Reading from the N-terminus, the 189-residue chain is GTPase HRas (189 aa).

10-17 (GARGVGKS) lines the GTP pocket. The Effector region signature appears at 32 to 40 (YDPTIEDSY). GTP is bound by residues 57–61 (DTAGQ) and 116–119 (NKCD). 2 S-palmitoyl cysteine; by host lipidation sites follow: Cys-181 and Cys-184. Cysteine methyl ester; by host is present on Cys-186. Cys-186 carries S-farnesyl cysteine; by host lipidation. A propeptide spans 187 to 189 (VLS) (removed in mature form).

Belongs to the small GTPase superfamily. Ras family.

Its subcellular location is the host cell membrane. The enzyme catalyses GTP + H2O = GDP + phosphate + H(+). Alternates between an inactive form bound to GDP and an active form bound to GTP. Activated by a guanine nucleotide-exchange factor (GEF) and inactivated by a GTPase-activating protein (GAP). The sequence is that of GTPase HRas (H-RAS) from Mus musculus (Mouse).